Consider the following 268-residue polypeptide: Protein atz-1 (268 aa).

Positions 171-243 (VDDANKLTEV…EEGEEDYEEE (73 aa)) form a coiled coil. The disordered stretch occupies residues 229 to 268 (DLMKEEEGEEDYEEEENYEVEEDFEDEEEYDEEGEEEDYE). Positions 231-268 (MKEEEGEEDYEEEENYEVEEDFEDEEEYDEEGEEEDYE) are enriched in acidic residues.

Its subcellular location is the nucleus. Functionally, plays a role in meiosis, germline development and oocyte morphogenesis. May play a role in DNA replication. In the germline, involved in the maintenance of transition zone nuclei and in chromosome structure and organization, but not required for mitotic proliferation. The protein is Protein atz-1 of Caenorhabditis elegans.